Reading from the N-terminus, the 126-residue chain is Histone H2B type 1-H (126 aa).

Positions Met-1–Lys-12 are enriched in low complexity. Residues Met-1–Glu-36 form a disordered region. An N-acetylproline modification is found at Pro-2. An ADP-ribosyl glutamic acid modification is found at Glu-3. At Lys-6 the chain carries N6-(2-hydroxyisobutyryl)lysine; alternate. Residue Lys-6 is modified to N6-(beta-hydroxybutyryl)lysine; alternate. Lys-6 carries the N6-acetyllysine; alternate modification. The residue at position 6 (Lys-6) is an N6-butyryllysine; alternate. The residue at position 6 (Lys-6) is an N6-crotonyllysine; alternate. Lys-6 carries the N6-lactoyllysine; alternate modification. Residue Lys-6 forms a Glycyl lysine isopeptide (Lys-Gly) (interchain with G-Cter in SUMO2); alternate linkage. Ser-7 carries the ADP-ribosylserine modification. Lys-12 is subject to N6-(beta-hydroxybutyryl)lysine; alternate. N6-acetyllysine; alternate is present on residues Lys-12 and Lys-13. 2 positions are modified to N6-crotonyllysine; alternate: Lys-12 and Lys-13. At Lys-12 the chain carries N6-lactoyllysine; alternate. Lys-13 carries the post-translational modification N6-(2-hydroxyisobutyryl)lysine; alternate. At Ser-15 the chain carries Phosphoserine; by STK4/MST1. Lys-16, Lys-17, Lys-21, and Lys-24 each carry N6-acetyllysine; alternate. Lys-16, Lys-17, Lys-21, and Lys-24 each carry N6-crotonyllysine; alternate. An N6-lactoyllysine; alternate mark is found at Lys-16, Lys-17, Lys-21, and Lys-24. Lys-17 carries the N6-glutaryllysine; alternate modification. Lys-21 and Lys-24 each carry N6-(2-hydroxyisobutyryl)lysine; alternate. Lys-21 is modified (N6-(beta-hydroxybutyryl)lysine; alternate). At Lys-21 the chain carries N6-butyryllysine; alternate. Residue Lys-21 forms a Glycyl lysine isopeptide (Lys-Gly) (interchain with G-Cter in SUMO2); alternate linkage. Lys-25 is subject to N6-(2-hydroxyisobutyryl)lysine. Lys-35 is modified (N6-(2-hydroxyisobutyryl)lysine; alternate). At Lys-35 the chain carries N6-(beta-hydroxybutyryl)lysine; alternate. Lys-35 is subject to N6-crotonyllysine; alternate. Lys-35 carries the post-translational modification N6-glutaryllysine; alternate. Lys-35 is subject to N6-succinyllysine; alternate. A Glycyl lysine isopeptide (Lys-Gly) (interchain with G-Cter in ubiquitin); alternate cross-link involves residue Lys-35. Position 36 is a polyADP-ribosyl glutamic acid (Glu-36). Ser-37 bears the Phosphoserine; by AMPK mark. Residues Lys-44, Lys-47, and Lys-58 each carry the N6-(2-hydroxyisobutyryl)lysine; alternate modification. The residue at position 44 (Lys-44) is an N6-lactoyllysine; alternate. An N6-glutaryllysine; alternate mark is found at Lys-44 and Lys-47. N6-methyllysine; alternate is present on Lys-47. Lys-58 bears the N6,N6-dimethyllysine; alternate mark. Arg-80 is subject to Dimethylated arginine. Lys-86 is modified (N6-(2-hydroxyisobutyryl)lysine; alternate). Lys-86 carries the post-translational modification N6-acetyllysine; alternate. Position 86 is an N6-lactoyllysine; alternate (Lys-86). Lys-86 bears the N6,N6,N6-trimethyllysine; alternate mark. 2 positions are modified to omega-N-methylarginine: Arg-87 and Arg-93. The residue at position 109 (Lys-109) is an N6-(2-hydroxyisobutyryl)lysine; alternate. Lys-109 carries the post-translational modification N6-(beta-hydroxybutyryl)lysine; alternate. An N6-lactoyllysine; alternate modification is found at Lys-109. Lys-109 carries the post-translational modification N6-glutaryllysine; alternate. An N6-methyllysine; alternate modification is found at Lys-109. Ser-113 carries an O-linked (GlcNAc) serine glycan. Thr-116 is subject to Phosphothreonine. An N6-(2-hydroxyisobutyryl)lysine; alternate mark is found at Lys-117 and Lys-121. The residue at position 117 (Lys-117) is an N6-(beta-hydroxybutyryl)lysine; alternate. An N6-lactoyllysine; alternate mark is found at Lys-117 and Lys-121. N6-glutaryllysine; alternate is present on residues Lys-117 and Lys-121. An N6-succinyllysine; alternate mark is found at Lys-117 and Lys-121. Position 117 is an N6-methylated lysine; alternate (Lys-117). Lys-121 is covalently cross-linked (Glycyl lysine isopeptide (Lys-Gly) (interchain with G-Cter in ubiquitin); alternate).

Belongs to the histone H2B family. The nucleosome is a histone octamer containing two molecules each of H2A, H2B, H3 and H4 assembled in one H3-H4 heterotetramer and two H2A-H2B heterodimers. The octamer wraps approximately 147 bp of DNA. In terms of processing, monoubiquitination at Lys-35 (H2BK34Ub) by the MSL1/MSL2 dimer is required for histone H3 'Lys-4' (H3K4me) and 'Lys-79' (H3K79me) methylation and transcription activation at specific gene loci, such as HOXA9 and MEIS1 loci. Similarly, monoubiquitination at Lys-121 (H2BK120Ub) by the RNF20/40 complex gives a specific tag for epigenetic transcriptional activation and is also prerequisite for histone H3 'Lys-4' and 'Lys-79' methylation. It also functions cooperatively with the FACT dimer to stimulate elongation by RNA polymerase II. H2BK120Ub also acts as a regulator of mRNA splicing: deubiquitination by USP49 is required for efficient cotranscriptional splicing of a large set of exons. Post-translationally, phosphorylated on Ser-15 (H2BS14ph) by STK4/MST1 during apoptosis; which facilitates apoptotic chromatin condensation. Also phosphorylated on Ser-15 in response to DNA double strand breaks (DSBs), and in correlation with somatic hypermutation and immunoglobulin class-switch recombination. Phosphorylation at Ser-37 (H2BS36ph) by AMPK in response to stress promotes transcription. GlcNAcylation at Ser-113 promotes monoubiquitination of Lys-121. It fluctuates in response to extracellular glucose, and associates with transcribed genes. In terms of processing, ADP-ribosylated by PARP1 or PARP2 on Ser-7 (H2BS6ADPr) in response to DNA damage. H2BS6ADPr promotes recruitment of CHD1L. Mono-ADP-ribosylated on Glu-3 (H2BE2ADPr) by PARP3 in response to single-strand breaks. Poly ADP-ribosylation on Glu-36 (H2BE35ADPr) by PARP1 regulates adipogenesis: it inhibits phosphorylation at Ser-37 (H2BS36ph), thereby blocking expression of pro-adipogenetic genes. Post-translationally, crotonylation (Kcr) is specifically present in male germ cells and marks testis-specific genes in post-meiotic cells, including X-linked genes that escape sex chromosome inactivation in haploid cells. Crotonylation marks active promoters and enhancers and confers resistance to transcriptional repressors. It is also associated with post-meiotically activated genes on autosomes. Hydroxybutyrylation of histones is induced by starvation. In terms of processing, lactylated in macrophages by EP300/P300 by using lactoyl-CoA directly derived from endogenous or exogenous lactate, leading to stimulates gene transcription.

The protein resides in the nucleus. It localises to the chromosome. Its function is as follows. Core component of nucleosome. Nucleosomes wrap and compact DNA into chromatin, limiting DNA accessibility to the cellular machineries which require DNA as a template. Histones thereby play a central role in transcription regulation, DNA repair, DNA replication and chromosomal stability. DNA accessibility is regulated via a complex set of post-translational modifications of histones, also called histone code, and nucleosome remodeling. This Mus musculus (Mouse) protein is Histone H2B type 1-H.